A 359-amino-acid polypeptide reads, in one-letter code: Putative nucleotidyltransferase MAB21L1 (359 aa).

Residues 23–24 (RK) and 63–66 (YEGL) each bind a ribonucleoside 5'-triphosphate. Mg(2+) contacts are provided by Glu-73 and Glu-75. Residues Lys-248 and 252 to 255 (SLLK) each bind a ribonucleoside 5'-triphosphate.

Belongs to the mab-21 family. In terms of assembly, monomer. Homodecamer; composed of 2 back to back homopentamers. The protein may exist as monomer in solution and oiligomerizes upon ligand binding.

Its subcellular location is the nucleus. In terms of biological role, putative nucleotidyltransferase required for several aspects of embryonic development including normal development of the eye. It is unclear whether it displays nucleotidyltransferase activity in vivo. Binds single-stranded RNA (ssRNA). The chain is Putative nucleotidyltransferase MAB21L1 (mab21l1) from Xenopus tropicalis (Western clawed frog).